The following is a 302-amino-acid chain: uncharacterized protein (302 aa).

This is an uncharacterized protein from Schizosaccharomyces pombe (strain 972 / ATCC 24843) (Fission yeast).